A 535-amino-acid polypeptide reads, in one-letter code: Beta-amylase (535 aa).

The substrate site is built by aspartate 51, histidine 91, and aspartate 99. The Proton donor role is filled by glutamate 184. Substrate contacts are provided by lysine 293, histidine 298, and threonine 340. Glutamate 378 serves as the catalytic Proton acceptor. Substrate contacts are provided by residues asparagine 379–alanine 380 and arginine 418. Repeat copies occupy residues glycine 489–glutamate 499, glycine 500–lysine 510, and glycine 511–glutamate 521. Residues glycine 489–proline 532 are 4 X 11 AA tandem repeats. The disordered stretch occupies residues threonine 513–methionine 535. Residues aspartate 522–proline 532 form a 4; approximate repeat.

It belongs to the glycosyl hydrolase 14 family. In terms of assembly, monomer.

It catalyses the reaction Hydrolysis of (1-&gt;4)-alpha-D-glucosidic linkages in polysaccharides so as to remove successive maltose units from the non-reducing ends of the chains.. The polypeptide is Beta-amylase (BMY1) (Hordeum vulgare (Barley)).